Here is a 259-residue protein sequence, read N- to C-terminus: Pimeloyl-[acyl-carrier protein] methyl ester esterase (259 aa).

An AB hydrolase-1 domain is found at 15–242 (HLVLLHGWGL…AAHAPFISHP (228 aa)). Residues Trp-22, 82-83 (SL), and 143-147 (FLALQ) contribute to the substrate site. Ser-82 serves as the catalytic Nucleophile. Catalysis depends on residues Asp-207 and His-235. His-235 contacts substrate.

Belongs to the AB hydrolase superfamily. Carboxylesterase BioH family. Monomer.

Its subcellular location is the cytoplasm. It carries out the reaction 6-carboxyhexanoyl-[ACP] methyl ester + H2O = 6-carboxyhexanoyl-[ACP] + methanol + H(+). Its pathway is cofactor biosynthesis; biotin biosynthesis. The physiological role of BioH is to remove the methyl group introduced by BioC when the pimeloyl moiety is complete. It allows to synthesize pimeloyl-ACP via the fatty acid synthetic pathway through the hydrolysis of the ester bonds of pimeloyl-ACP esters. This Cronobacter sakazakii (strain ATCC BAA-894) (Enterobacter sakazakii) protein is Pimeloyl-[acyl-carrier protein] methyl ester esterase.